A 263-amino-acid chain; its full sequence is Small ribosomal subunit protein eS4 (263 aa).

The 63-residue stretch at 42-104 folds into the S4 RNA-binding domain; the sequence is LPLIIFLRNK…TGENFRLIYD (63 aa). A Glycyl lysine isopeptide (Lys-Gly) (interchain with G-Cter in SUMO2) cross-link involves residue lysine 230. Residue lysine 233 is modified to N6-acetyllysine.

Belongs to the eukaryotic ribosomal protein eS4 family. As to quaternary structure, component of the small ribosomal subunit. Part of the small subunit (SSU) processome, composed of more than 70 proteins and the RNA chaperone small nucleolar RNA (snoRNA) U3. Identified in a IGF2BP1-dependent mRNP granule complex containing untranslated mRNAs.

It localises to the cytoplasm. Its subcellular location is the nucleus. The protein resides in the nucleolus. In terms of biological role, component of the small ribosomal subunit. The ribosome is a large ribonucleoprotein complex responsible for the synthesis of proteins in the cell. Part of the small subunit (SSU) processome, first precursor of the small eukaryotic ribosomal subunit. During the assembly of the SSU processome in the nucleolus, many ribosome biogenesis factors, an RNA chaperone and ribosomal proteins associate with the nascent pre-rRNA and work in concert to generate RNA folding, modifications, rearrangements and cleavage as well as targeted degradation of pre-ribosomal RNA by the RNA exosome. The chain is Small ribosomal subunit protein eS4 (RPS4X) from Oryctolagus cuniculus (Rabbit).